The chain runs to 472 residues: Glutamine synthetase (472 aa).

Residues 17 to 101 form the GS beta-grasp domain; it reads YDIKFVLLRF…LRCSIYEPST (85 aa). The region spanning 109–472 is the GS catalytic domain; it reads PRSIAIRAEN…HPVEFEMYYA (364 aa). Mg(2+) contacts are provided by glutamate 134 and glutamate 136. Glutamate 212 is a binding site for ATP. Mg(2+) contacts are provided by glutamate 217 and glutamate 225. L-glutamate-binding positions include 269 to 270 and glycine 270; that span reads NG. Mg(2+) is bound at residue histidine 274. ATP-binding positions include 276-278 and serine 278; that span reads NMS. L-glutamate-binding residues include arginine 326, glutamate 332, and arginine 344. ATP contacts are provided by arginine 344, arginine 349, and lysine 357. Position 362 (glutamate 362) interacts with Mg(2+). Residue arginine 364 coordinates L-glutamate. Tyrosine 402 is modified (O-AMP-tyrosine).

It belongs to the glutamine synthetase family. In terms of assembly, oligomer of 12 subunits arranged in the form of two hexameric ring. Mg(2+) serves as cofactor.

The protein localises to the cytoplasm. The enzyme catalyses L-glutamate + NH4(+) + ATP = L-glutamine + ADP + phosphate + H(+). The activity of this enzyme could be controlled by adenylation under conditions of abundant glutamine. Its function is as follows. Catalyzes the ATP-dependent biosynthesis of glutamine from glutamate and ammonia. In Pasteurella multocida (strain Pm70), this protein is Glutamine synthetase.